A 290-amino-acid polypeptide reads, in one-letter code: ATP synthase gamma chain (290 aa).

The protein belongs to the ATPase gamma chain family. In terms of assembly, F-type ATPases have 2 components, CF(1) - the catalytic core - and CF(0) - the membrane proton channel. CF(1) has five subunits: alpha(3), beta(3), gamma(1), delta(1), epsilon(1). CF(0) has three main subunits: a, b and c.

Its subcellular location is the cell inner membrane. Produces ATP from ADP in the presence of a proton gradient across the membrane. The gamma chain is believed to be important in regulating ATPase activity and the flow of protons through the CF(0) complex. The protein is ATP synthase gamma chain of Chelativorans sp. (strain BNC1).